Here is a 344-residue protein sequence, read N- to C-terminus: Uroporphyrinogen decarboxylase (344 aa).

Substrate is bound by residues 29 to 33, Asp-79, Tyr-153, Ser-208, and His-324; that span reads RQAGR.

This sequence belongs to the uroporphyrinogen decarboxylase family. As to quaternary structure, homodimer.

It is found in the cytoplasm. It catalyses the reaction uroporphyrinogen III + 4 H(+) = coproporphyrinogen III + 4 CO2. It participates in porphyrin-containing compound metabolism; protoporphyrin-IX biosynthesis; coproporphyrinogen-III from 5-aminolevulinate: step 4/4. Catalyzes the decarboxylation of four acetate groups of uroporphyrinogen-III to yield coproporphyrinogen-III. This is Uroporphyrinogen decarboxylase from Rhizorhabdus wittichii (strain DSM 6014 / CCUG 31198 / JCM 15750 / NBRC 105917 / EY 4224 / RW1) (Sphingomonas wittichii).